A 346-amino-acid polypeptide reads, in one-letter code: Aldose 1-epimerase (346 aa).

Substrate is bound at residue Arg-79. The Proton donor role is filled by His-175. Asp-245 serves as a coordination point for substrate. The active-site Proton acceptor is the Glu-309.

Belongs to the aldose epimerase family.

It localises to the cytoplasm. It carries out the reaction alpha-D-glucose = beta-D-glucose. It participates in carbohydrate metabolism; hexose metabolism. In terms of biological role, mutarotase converts alpha-aldose to the beta-anomer. It is active on D-glucose, L-arabinose, D-xylose, D-galactose, maltose and lactose. This is Aldose 1-epimerase (galM) from Escherichia coli (strain K12).